The sequence spans 522 residues: TNF receptor-associated factor 6 (522 aa).

The interaction with TAX1BP1 stretch occupies residues M1–I354. An RING-type zinc finger spans residues C70–N109. Residue K124 forms a Glycyl lysine isopeptide (Lys-Gly) (interchain with G-Cter in SUMO); alternate linkage. Residue K124 forms a Glycyl lysine isopeptide (Lys-Gly) (interchain with G-Cter in ubiquitin); alternate linkage. Residue K142 forms a Glycyl lysine isopeptide (Lys-Gly) (interchain with G-Cter in SUMO) linkage. TRAF-type zinc fingers lie at residues D150–E202 and I203–A259. A coiled-coil region spans residues Y288–Q348. Residue K319 forms a Glycyl lysine isopeptide (Lys-Gly) (interchain with G-Cter in ubiquitin) linkage. The MATH domain maps to N350–V499. The tract at residues W355–V522 is interaction with TANK. Residue K453 forms a Glycyl lysine isopeptide (Lys-Gly) (interchain with G-Cter in SUMO) linkage.

The protein belongs to the TNF receptor-associated factor family. A subfamily. Homotrimer. Homooligomer. N-terminal region is dimeric while C-terminal region is trimeric; maybe providing a mode of oligomerization. Upon IL1B treatment, forms a complex with PELI1, IRAK1, IRAK4 and MYD88; this complex recruits MAP3K7/TAK1, TAB1 and TAB2 to mediate NF-kappa-B activation. Direct binding of SMAD6 to PELI1 prevents the complex formation and hence negatively regulates IL1R-TLR signaling and eventually NF-kappa-B-mediated gene expression. Binds to TNFRSF5/CD40 and TNFRSF11A/RANK. Associates with NGFR, TNFRSF17, IRAK2, IRAK3, RIPK2, MAP3K1, MAP3K5, MAP3K14, CSK, TRAF, TRAF-interacting protein TRIP and TNF receptor associated protein TDP2. Interacts with IL17R. Interacts with SQSTM1 bridging NTRK1 and NGFR. Forms a ternary complex with SQSTM1 and PRKCZ. Interacts with PELI2 and PELI3. Binds UBE2V1. Interacts with TAX1BP1; this interaction mediates deubiquitination of TRAF6 and inhibition of NF-kappa-B activation. Interacts with ZNF675. Interacts with ARRB1 and ARRB2. Interacts with MAP3K7 and TAB1/MAP3K7IP1; during IL-1 signaling. Interacts with UBE2N. Interacts with TGFBR1, HDAC1 and RANGAP1. Interacts with AKT1, AKT2 and AKT3. Interacts (via TRAF domains) with NUMBL (via C-terminal). Interacts with RBCK1. Interacts with LIMD1 (via LIM domains). Interacts with RSAD2/viperin. Interacts (via C-terminus) with EIF2AK2/PKR (via the kinase catalytic domain). Interacts with ZFAND5. Interacts with IL1RL1. Interacts with TRAFD1. Interacts with AJUBA. Interacts with MAVS/IPS1. Interacts (via TRAF domains) with DYNC2I2 (via WD domains). Interacts with IFIT3 (via N-terminus). Interacts with TICAM2. Interacts with CARD14. Interacts with CD40 and MAP3K8; the interaction is required for ERK activation. Interacts with TICAM1 and this interaction is enhanced in the presence of WDFY1. Interacts with TANK; this interaction increases in response to DNA damage. Interacts with USP10; this interaction increases in response to DNA damage. Interacts with ZC3H12A; this interaction increases in response to DNA damage and is stimulated by TANK. Interacts with WDFY3. Interacts with TRIM13. Interacts with GPS2. Interacts (via C-terminus) with SASH1. Interacts with LRRC19. Interacts with IL17RA and TRAF3IP2. Interacts with TOMM70. Interacts with AMBRA1; interaction is required to mediate 'Lys-63'-linked ubiquitination of ULK1. Interacts with CRBN; this interaction inhibits TLR4-mediated signaling by preventing TRAF6-mediated ubiquitination of ECSIT. In terms of processing, sumoylated on Lys-124, Lys-142 and Lys-453 with SUMO1. Polyubiquitinated on Lys-124 by TRAF3IP2; after cell stimulation with IL17A. Polyubiquitinated on Lys-124; after cell stimulation with IL1B or TGFB. This ligand-induced cell stimulation leads to dimerization/oligomerization of TRAF6 molecules, followed by auto-ubiquitination which involves UBE2N and UBE2V1 and leads to TRAF6 activation. This 'Lys-63' site-specific poly-ubiquitination appears to be associated with the activation of signaling molecules. Endogenous autoubiquitination occurs only for the cytoplasmic form. Deubiquitinated by USP10 in a TANK-dependent manner, leading to the negative regulation of NF-kappaB signaling upon DNA damage. LRRC19 induces 'Lys-63' ubiquitination. Ubiquitinated at Lys-319 by the SCF(FBXL2) complex, leading to its degradation by the proteasome. Post-translationally, (Microbial infection) Deubiquitinated by Epstein-Barr virus BPLF1 on both 'Lys-48' and 'Lys-63'-linked ubiquitin chains; leading to NF-kappa-B signaling inhibition. Expressed in heart, brain, placenta, lung, liver, skeletal muscle, kidney and pancreas.

Its subcellular location is the cytoplasm. It is found in the cell cortex. The protein resides in the nucleus. It localises to the lipid droplet. The enzyme catalyses S-ubiquitinyl-[E2 ubiquitin-conjugating enzyme]-L-cysteine + [acceptor protein]-L-lysine = [E2 ubiquitin-conjugating enzyme]-L-cysteine + N(6)-ubiquitinyl-[acceptor protein]-L-lysine.. It functions in the pathway protein modification; protein ubiquitination. E3 ubiquitin ligase that, together with UBE2N and UBE2V1, mediates the synthesis of 'Lys-63'-linked-polyubiquitin chains conjugated to proteins, such as ECSIT, IKBKG, IRAK1, AKT1 and AKT2. Also mediates ubiquitination of free/unanchored polyubiquitin chain that leads to MAP3K7 activation. Leads to the activation of NF-kappa-B and JUN. Seems to also play a role in dendritic cells (DCs) maturation and/or activation. Represses c-Myb-mediated transactivation, in B-lymphocytes. Adapter protein that seems to play a role in signal transduction initiated via TNF receptor, IL-1 receptor and IL-17 receptor. Regulates osteoclast differentiation by mediating the activation of adapter protein complex 1 (AP-1) and NF-kappa-B, in response to RANK-L stimulation. Together with MAP3K8, mediates CD40 signals that activate ERK in B-cells and macrophages, and thus may play a role in the regulation of immunoglobulin production. Acts as a regulator of the JNK and NF-kappa-B signaling pathways by initiating assembly of heterotypic 'Lys-63'-/'Lys-48'-linked branched ubiquitin chains that are then recognized by TAB2: TRAF6 catalyzes initial 'Lys-63'-linked-polyubiquitin chains that are then branched via 'Lys-48'-linked polyubiquitin by HUWE1. 'Lys-63'-/'Lys-48'-linked branched ubiquitin chains protect 'Lys-63'-linkages from CYLD deubiquitination. Participates also in the TCR signaling by ubiquitinating LAT. The polypeptide is TNF receptor-associated factor 6 (TRAF6) (Homo sapiens (Human)).